Here is an 88-residue protein sequence, read N- to C-terminus: UPF0335 protein MexAM1_META1p2947 (88 aa).

It belongs to the UPF0335 family.

This is UPF0335 protein MexAM1_META1p2947 from Methylorubrum extorquens (strain ATCC 14718 / DSM 1338 / JCM 2805 / NCIMB 9133 / AM1) (Methylobacterium extorquens).